Reading from the N-terminus, the 189-residue chain is 3-isopropylmalate dehydratase small subunit (189 aa).

Belongs to the LeuD family. LeuD type 1 subfamily. As to quaternary structure, heterodimer of LeuC and LeuD.

The enzyme catalyses (2R,3S)-3-isopropylmalate = (2S)-2-isopropylmalate. Its pathway is amino-acid biosynthesis; L-leucine biosynthesis; L-leucine from 3-methyl-2-oxobutanoate: step 2/4. Functionally, catalyzes the isomerization between 2-isopropylmalate and 3-isopropylmalate, via the formation of 2-isopropylmaleate. The protein is 3-isopropylmalate dehydratase small subunit of Staphylococcus epidermidis (strain ATCC 35984 / DSM 28319 / BCRC 17069 / CCUG 31568 / BM 3577 / RP62A).